We begin with the raw amino-acid sequence, 233 residues long: Small ribosomal subunit protein uS3 (233 aa).

The KH type-2 domain occupies 39 to 107 (VRQFLTKELS…PAQINTYEIR (69 aa)).

It belongs to the universal ribosomal protein uS3 family. Part of the 30S ribosomal subunit. Forms a tight complex with proteins S10 and S14.

Its function is as follows. Binds the lower part of the 30S subunit head. Binds mRNA in the 70S ribosome, positioning it for translation. The polypeptide is Small ribosomal subunit protein uS3 (Hamiltonella defensa subsp. Acyrthosiphon pisum (strain 5AT)).